Reading from the N-terminus, the 26-residue chain is Delta-hemolysin (26 aa).

Methionine 1 carries the post-translational modification N-formylmethionine.

This sequence belongs to the delta-lysin family.

The protein resides in the secreted. The protein localises to the host cell membrane. Functionally, lyses erythrocytes and many other mammalian cells. The polypeptide is Delta-hemolysin (hld) (Staphylococcus aureus (strain Mu50 / ATCC 700699)).